Here is a 407-residue protein sequence, read N- to C-terminus: Multifunctional CCA protein (407 aa).

Residues Gly-8 and Arg-11 each coordinate ATP. Gly-8 and Arg-11 together coordinate CTP. 2 residues coordinate Mg(2+): Asp-21 and Asp-23. ATP-binding residues include Arg-91, Arg-137, and Arg-140. Residues Arg-91, Arg-137, and Arg-140 each coordinate CTP. An HD domain is found at 228–329 (TGIHTLMVAQ…IKIFDKMDVW (102 aa)).

This sequence belongs to the tRNA nucleotidyltransferase/poly(A) polymerase family. Bacterial CCA-adding enzyme type 1 subfamily. As to quaternary structure, monomer. Can also form homodimers and oligomers. The cofactor is Mg(2+). It depends on Ni(2+) as a cofactor.

The enzyme catalyses a tRNA precursor + 2 CTP + ATP = a tRNA with a 3' CCA end + 3 diphosphate. It catalyses the reaction a tRNA with a 3' CCA end + 2 CTP + ATP = a tRNA with a 3' CCACCA end + 3 diphosphate. In terms of biological role, catalyzes the addition and repair of the essential 3'-terminal CCA sequence in tRNAs without using a nucleic acid template. Adds these three nucleotides in the order of C, C, and A to the tRNA nucleotide-73, using CTP and ATP as substrates and producing inorganic pyrophosphate. tRNA 3'-terminal CCA addition is required both for tRNA processing and repair. Also involved in tRNA surveillance by mediating tandem CCA addition to generate a CCACCA at the 3' terminus of unstable tRNAs. While stable tRNAs receive only 3'-terminal CCA, unstable tRNAs are marked with CCACCA and rapidly degraded. This Aliivibrio fischeri (strain ATCC 700601 / ES114) (Vibrio fischeri) protein is Multifunctional CCA protein.